Here is a 302-residue protein sequence, read N- to C-terminus: Fluoroacetate dehalogenase (302 aa).

The region spanning 32 to 270 is the AB hydrolase-1 domain; that stretch reads PPLLLLHGFP…LDVWRKWASD (239 aa). The active-site Nucleophile is the D110. Residues R111, R114, H155, W156, and Y219 each contribute to the fluoroacetate site. The Proton acceptor role is filled by H280.

This sequence belongs to the AB hydrolase superfamily. Epoxide hydrolase family. As to quaternary structure, homodimer.

The enzyme catalyses a haloacetate + H2O = a halide anion + glycolate + H(+). It catalyses the reaction fluoroacetate + H2O = fluoride + glycolate + H(+). The catalysed reaction is chloroacetate + H2O = glycolate + chloride + H(+). Its function is as follows. Catalyzes the hydrolytic defluorination of fluoroacetate to produce glycolate. Has lower activity towards chloroacetate and bromoacetate. The protein is Fluoroacetate dehalogenase of Rhodopseudomonas palustris (strain ATCC BAA-98 / CGA009).